The chain runs to 733 residues: Phosphoribosylformylglycinamidine synthase subunit PurL (733 aa).

His44 is a catalytic residue. ATP contacts are provided by Tyr47 and Lys86. Glu88 serves as a coordination point for Mg(2+). Substrate is bound by residues 89 to 92 (SHNH) and Arg111. Residue His90 is the Proton acceptor of the active site. Asp112 contributes to the Mg(2+) binding site. Gln233 provides a ligand contact to substrate. Asp261 serves as a coordination point for Mg(2+). Residue 305 to 307 (ESQ) participates in substrate binding. Positions 492 and 529 each coordinate ATP. Residue Asn530 coordinates Mg(2+). Ser532 serves as a coordination point for substrate.

It belongs to the FGAMS family. Monomer. Part of the FGAM synthase complex composed of 1 PurL, 1 PurQ and 2 PurS subunits.

It is found in the cytoplasm. It carries out the reaction N(2)-formyl-N(1)-(5-phospho-beta-D-ribosyl)glycinamide + L-glutamine + ATP + H2O = 2-formamido-N(1)-(5-O-phospho-beta-D-ribosyl)acetamidine + L-glutamate + ADP + phosphate + H(+). It participates in purine metabolism; IMP biosynthesis via de novo pathway; 5-amino-1-(5-phospho-D-ribosyl)imidazole from N(2)-formyl-N(1)-(5-phospho-D-ribosyl)glycinamide: step 1/2. Its function is as follows. Part of the phosphoribosylformylglycinamidine synthase complex involved in the purines biosynthetic pathway. Catalyzes the ATP-dependent conversion of formylglycinamide ribonucleotide (FGAR) and glutamine to yield formylglycinamidine ribonucleotide (FGAM) and glutamate. The FGAM synthase complex is composed of three subunits. PurQ produces an ammonia molecule by converting glutamine to glutamate. PurL transfers the ammonia molecule to FGAR to form FGAM in an ATP-dependent manner. PurS interacts with PurQ and PurL and is thought to assist in the transfer of the ammonia molecule from PurQ to PurL. This is Phosphoribosylformylglycinamidine synthase subunit PurL from Thermomicrobium roseum (strain ATCC 27502 / DSM 5159 / P-2).